The chain runs to 469 residues: Glutamate--tRNA ligase (469 aa).

The 'HIGH' region signature appears at 9–19 (PSPTGFLHVGG). Positions 98, 100, 125, and 127 each coordinate Zn(2+). Positions 236-240 (KLSKR) match the 'KMSKS' region motif. Position 239 (K239) interacts with ATP.

The protein belongs to the class-I aminoacyl-tRNA synthetase family. Glutamate--tRNA ligase type 1 subfamily. As to quaternary structure, monomer. Zn(2+) is required as a cofactor.

The protein localises to the cytoplasm. The enzyme catalyses tRNA(Glu) + L-glutamate + ATP = L-glutamyl-tRNA(Glu) + AMP + diphosphate. In terms of biological role, catalyzes the attachment of glutamate to tRNA(Glu) in a two-step reaction: glutamate is first activated by ATP to form Glu-AMP and then transferred to the acceptor end of tRNA(Glu). The sequence is that of Glutamate--tRNA ligase from Shewanella sediminis (strain HAW-EB3).